Consider the following 3084-residue polypeptide: Protein prune homolog 2 (3084 aa).

N-acetylmethionine is present on Met1. The short motif at 109–111 (GSH) is the DHH motif element. Disordered stretches follow at residues 394 to 417 (QPSSVNFIENPPELNDSNQAQADG), 430 to 465 (TIRSSRSSKESSVFLSDDSPVGDGGAPHHSLLPGFD), 500 to 536 (ASEQSQPSSHSADYSPEDDFPNSDSSEGNLSAGPKGL), 672 to 733 (EQES…QKEE), 811 to 837 (KNTWNLHPTNNETPSGQEPSEWAMGQS), 861 to 907 (EIWG…KATG), 947 to 1080 (SASN…DDPS), 1224 to 1316 (NMPS…GQSE), 1338 to 1395 (SGVN…LEVE), 1502 to 1543 (MNST…DLHD), 1600 to 1652 (GFGK…TTKR), 1776 to 1799 (ETGTMDTTWHGSASTEAKNGDPDK), 1836 to 1886 (GELE…GDKS), 1961 to 1980 (DENGCVSTGVSPTECQQENQ), 2071 to 2196 (ILTH…NPEV), 2410 to 2782 (MLLS…SHPR), 2797 to 2816 (QSEGSILSDDNLDSPDEIDI), and 2825 to 2859 (DEADSFEYTNHEDPTANKSSGQESESIPEYTAEEE). Over residues 501–511 (SEQSQPSSHSA) the composition is skewed to polar residues. 2 stretches are compositionally biased toward basic and acidic residues: residues 682 to 696 (PWKDPKPEPVERRTS) and 723 to 733 (GNKEAQDQKEE). 2 stretches are compositionally biased toward polar residues: residues 811-828 (KNTWNLHPTNNETPSGQE) and 865-891 (KNNSSKDTSLTSGSPTSDLGQTWNNSK). The segment covering 962–975 (TNYSTSDSYTSPTY) has biased composition (low complexity). Residues 977-999 (GDEKEIANKPVDKDNGFEAKDAE) show a composition bias toward basic and acidic residues. Residues 1009–1019 (ATSSQQSQRNR) show a composition bias toward polar residues. Basic and acidic residues predominate over residues 1034 to 1063 (HTEDKPEGNDAHHPDSDALKTEHAEDKNAS). Low complexity predominate over residues 1071 to 1080 (SSPSSYDDPS). Residues 1248–1261 (SPRHSNGKDSHMLE) are compositionally biased toward basic and acidic residues. The segment covering 1265 to 1294 (LSESGGLTSQPVNQDTWGDSQGDTASSVTG) has biased composition (polar residues). Positions 1350–1366 (KPRDQEFSSSDAFEHQD) are enriched in basic and acidic residues. Residues 1368 to 1378 (SSASGKISSLS) are compositionally biased toward low complexity. Composition is skewed to polar residues over residues 1779 to 1792 (TMDTTWHGSASTEA), 1854 to 1869 (PIQNDSEPVDTGSTNP), and 1965 to 1980 (CVSTGVSPTECQQENQ). Over residues 2089 to 2103 (VCHDSEGEQKMEKHT) the composition is skewed to basic and acidic residues. Low complexity predominate over residues 2162–2174 (SSKPASSRSSPEP). 3 stretches are compositionally biased toward basic and acidic residues: residues 2416–2428 (PDHREEDKAETNI), 2506–2525 (KQTELEYKEEKQPEQSEDHQ), and 2535–2553 (SHEKDSPLKPEAREARENI). Residues 2569–2584 (PETQLSGTPDTCQSEF) show a composition bias toward polar residues. Low complexity predominate over residues 2595 to 2606 (RMSSSSNHESAS). Residues 2607–2617 (LENPAQDQSWM) show a composition bias toward polar residues. The span at 2653–2664 (KGPKSQVLERNK) shows a compositional bias: basic and acidic residues. A compositionally biased stretch (acidic residues) spans 2806–2816 (DNLDSPDEIDI). Over residues 2840–2849 (ANKSSGQESE) the composition is skewed to polar residues. The 162-residue stretch at 2879 to 3040 (DMKVIEPYRR…SIIKYDEEKS (162 aa)) folds into the CRAL-TRIO domain.

Belongs to the PPase class C family. Prune subfamily.

Its subcellular location is the cytoplasm. Functionally, may play an important role in regulating differentiation, survival and aggressiveness of the tumor cells. The sequence is that of Protein prune homolog 2 (Prune2) from Mus musculus (Mouse).